Reading from the N-terminus, the 407-residue chain is Imidazolonepropionase (407 aa).

Positions 68 and 70 each coordinate Fe(3+). Zn(2+) contacts are provided by His-68 and His-70. 3 residues coordinate 4-imidazolone-5-propanoate: Arg-77, Tyr-140, and His-173. Residue Tyr-140 coordinates N-formimidoyl-L-glutamate. Residue His-238 coordinates Fe(3+). His-238 lines the Zn(2+) pocket. Gln-241 is a binding site for 4-imidazolone-5-propanoate. Position 313 (Asp-313) interacts with Fe(3+). Asp-313 is a Zn(2+) binding site. N-formimidoyl-L-glutamate is bound by residues Asn-315 and Gly-317. Thr-318 provides a ligand contact to 4-imidazolone-5-propanoate.

Belongs to the metallo-dependent hydrolases superfamily. HutI family. Zn(2+) serves as cofactor. Requires Fe(3+) as cofactor.

The protein resides in the cytoplasm. It carries out the reaction 4-imidazolone-5-propanoate + H2O = N-formimidoyl-L-glutamate. It functions in the pathway amino-acid degradation; L-histidine degradation into L-glutamate; N-formimidoyl-L-glutamate from L-histidine: step 3/3. Functionally, catalyzes the hydrolytic cleavage of the carbon-nitrogen bond in imidazolone-5-propanoate to yield N-formimidoyl-L-glutamate. It is the third step in the universal histidine degradation pathway. This chain is Imidazolonepropionase, found in Burkholderia multivorans (strain ATCC 17616 / 249).